The chain runs to 495 residues: 2-carboxy-D-arabinitol-1-phosphatase (495 aa).

The span at 1–12 (MLLFAPTPPPSP) shows a compositional bias: pro residues. The disordered stretch occupies residues 1 to 23 (MLLFAPTPPPSPATAHRRPGGSA). A chloroplast-targeting transit peptide spans 1 to 50 (MLLFAPTPPPSPATAHRRPGGSAASCIRCSSVRELDRSPSRPPLPPLAEA). The Tele-phosphohistidine intermediate role is filled by H58. E132 serves as the catalytic Proton donor/acceptor.

The protein belongs to the phosphoglycerate mutase family.

It localises to the plastid. The protein resides in the chloroplast stroma. It catalyses the reaction 2-carboxy-D-arabinitol 1-phosphate + H2O = 2-carboxy-D-arabinitol + phosphate. Its activity is regulated as follows. Inactivated by oxidized glutathione (GSSG) at pH 8.0. In terms of biological role, phosphoglycerate mutase-like protein lacking PGM activity, but having 2-carboxy-D-arabinitol 1-phosphate (CA1P) phosphatase activity. Can dephosphorylate the closely related compounds 2-carboxy-D-arabinitol 1,5-bisphosphate (CABP) and 2-carboxy-D-ribitol-1,5-bisphosphate(CRBP), and 2,3-diphosphoglycerate. Prevents the accumulation of D-glycero-2,3-pentodiulose-1,5-bisphosphate (PDBP) a potent inhibitor of ribulose-1,5-bisphosphate carboxylase (RuBisCO). PDBP is produced during the oxidation of ribulose-1,5-bisphosphate, the substrate of RuBisCO. The chain is 2-carboxy-D-arabinitol-1-phosphatase from Triticum aestivum (Wheat).